A 336-amino-acid polypeptide reads, in one-letter code: Aspartate carbamoyltransferase catalytic subunit (336 aa).

Positions 71 and 72 each coordinate carbamoyl phosphate. K99 is a binding site for L-aspartate. R121, H151, and Q154 together coordinate carbamoyl phosphate. L-aspartate contacts are provided by R184 and R239. 2 residues coordinate carbamoyl phosphate: G280 and P281.

This sequence belongs to the aspartate/ornithine carbamoyltransferase superfamily. ATCase family. In terms of assembly, heterododecamer (2C3:3R2) of six catalytic PyrB chains organized as two trimers (C3), and six regulatory PyrI chains organized as three dimers (R2).

It catalyses the reaction carbamoyl phosphate + L-aspartate = N-carbamoyl-L-aspartate + phosphate + H(+). It functions in the pathway pyrimidine metabolism; UMP biosynthesis via de novo pathway; (S)-dihydroorotate from bicarbonate: step 2/3. Catalyzes the condensation of carbamoyl phosphate and aspartate to form carbamoyl aspartate and inorganic phosphate, the committed step in the de novo pyrimidine nucleotide biosynthesis pathway. This Azotobacter vinelandii (strain DJ / ATCC BAA-1303) protein is Aspartate carbamoyltransferase catalytic subunit.